The chain runs to 115 residues: Large ribosomal subunit protein bL19 (115 aa).

The protein belongs to the bacterial ribosomal protein bL19 family.

Its function is as follows. This protein is located at the 30S-50S ribosomal subunit interface and may play a role in the structure and function of the aminoacyl-tRNA binding site. The protein is Large ribosomal subunit protein bL19 of Francisella tularensis subsp. mediasiatica (strain FSC147).